A 207-amino-acid chain; its full sequence is Small ribosomal subunit protein uS4 (207 aa).

An S4 RNA-binding domain is found at serine 97–alanine 159.

It belongs to the universal ribosomal protein uS4 family. Part of the 30S ribosomal subunit. Contacts protein S5. The interaction surface between S4 and S5 is involved in control of translational fidelity.

Functionally, one of the primary rRNA binding proteins, it binds directly to 16S rRNA where it nucleates assembly of the body of the 30S subunit. In terms of biological role, with S5 and S12 plays an important role in translational accuracy. In Halorhodospira halophila (strain DSM 244 / SL1) (Ectothiorhodospira halophila (strain DSM 244 / SL1)), this protein is Small ribosomal subunit protein uS4.